Reading from the N-terminus, the 354-residue chain is Thiamine thiazole synthase (354 aa).

Substrate-binding positions include alanine 83, 104 to 105, glycine 112, and valine 177; that span reads EA. Cysteine 210 is subject to 2,3-didehydroalanine (Cys). Residues aspartate 212, histidine 227, methionine 305, and 315-317 contribute to the substrate site; that span reads RMR.

This sequence belongs to the THI4 family. As to quaternary structure, homooctamer. It depends on Fe cation as a cofactor. Post-translationally, during the catalytic reaction, a sulfide is transferred from Cys-210 to a reaction intermediate, generating a dehydroalanine residue.

It localises to the cytoplasm. The protein resides in the nucleus. The catalysed reaction is [ADP-thiazole synthase]-L-cysteine + glycine + NAD(+) = [ADP-thiazole synthase]-dehydroalanine + ADP-5-ethyl-4-methylthiazole-2-carboxylate + nicotinamide + 3 H2O + 2 H(+). In terms of biological role, involved in biosynthesis of the thiamine precursor thiazole. Catalyzes the conversion of NAD and glycine to adenosine diphosphate 5-(2-hydroxyethyl)-4-methylthiazole-2-carboxylic acid (ADT), an adenylated thiazole intermediate. The reaction includes an iron-dependent sulfide transfer from a conserved cysteine residue of the protein to a thiazole intermediate. The enzyme can only undergo a single turnover, which suggests it is a suicide enzyme. May have additional roles in adaptation to various stress conditions and in DNA damage tolerance. The chain is Thiamine thiazole synthase from Candida albicans (strain WO-1) (Yeast).